A 232-amino-acid chain; its full sequence is Ubiquinone biosynthesis O-methyltransferase (232 aa).

S-adenosyl-L-methionine contacts are provided by Arg-36, Gly-55, Asp-76, and Met-120.

The protein belongs to the methyltransferase superfamily. UbiG/COQ3 family.

It carries out the reaction a 3-demethylubiquinol + S-adenosyl-L-methionine = a ubiquinol + S-adenosyl-L-homocysteine + H(+). It catalyses the reaction a 3-(all-trans-polyprenyl)benzene-1,2-diol + S-adenosyl-L-methionine = a 2-methoxy-6-(all-trans-polyprenyl)phenol + S-adenosyl-L-homocysteine + H(+). It functions in the pathway cofactor biosynthesis; ubiquinone biosynthesis. In terms of biological role, O-methyltransferase that catalyzes the 2 O-methylation steps in the ubiquinone biosynthetic pathway. This chain is Ubiquinone biosynthesis O-methyltransferase, found in Thiobacillus denitrificans (strain ATCC 25259 / T1).